Here is a 285-residue protein sequence, read N- to C-terminus: uncharacterized protein (285 aa).

Residue Ser-168 participates in substrate binding. Tyr-181 serves as the catalytic Proton acceptor.

Belongs to the short-chain dehydrogenases/reductases (SDR) family.

This is an uncharacterized protein from Haemophilus influenzae (strain ATCC 51907 / DSM 11121 / KW20 / Rd).